Here is a 312-residue protein sequence, read N- to C-terminus: Olfactory receptor 6C76 (312 aa).

The Extracellular segment spans residues M1 to V23. N3 carries an N-linked (GlcNAc...) asparagine glycan. Residues V24–I44 form a helical membrane-spanning segment. The Cytoplasmic segment spans residues S45–M57. A helical membrane pass occupies residues Y58–I80. Over S81–C94 the chain is Extracellular. C94 and C176 are disulfide-bonded. Residues A95–M115 form a helical membrane-spanning segment. The Cytoplasmic portion of the chain corresponds to S116–I142. A helical transmembrane segment spans residues I143–L163. Residues D164–M195 lie on the Extracellular side of the membrane. The chain crosses the membrane as a helical span at residues S196 to T216. At Y217–C238 the chain is on the cytoplasmic side. Residues S239–T259 form a helical membrane-spanning segment. Topologically, residues S260–L267 are extracellular. A helical transmembrane segment spans residues T268–T288. Over L289–H312 the chain is Cytoplasmic.

The protein belongs to the G-protein coupled receptor 1 family.

It is found in the cell membrane. Odorant receptor. The polypeptide is Olfactory receptor 6C76 (OR6C76) (Homo sapiens (Human)).